Here is a 309-residue protein sequence, read N- to C-terminus: Homoserine O-succinyltransferase (309 aa).

Cys-142 (acyl-thioester intermediate) is an active-site residue. Lys-163 and Ser-192 together coordinate substrate. His-235 serves as the catalytic Proton acceptor. Glu-237 is an active-site residue. Residue Arg-249 participates in substrate binding.

It belongs to the MetA family.

Its subcellular location is the cytoplasm. It carries out the reaction L-homoserine + succinyl-CoA = O-succinyl-L-homoserine + CoA. It participates in amino-acid biosynthesis; L-methionine biosynthesis via de novo pathway; O-succinyl-L-homoserine from L-homoserine: step 1/1. Functionally, transfers a succinyl group from succinyl-CoA to L-homoserine, forming succinyl-L-homoserine. In Klebsiella pneumoniae (strain 342), this protein is Homoserine O-succinyltransferase.